The chain runs to 219 residues: tRNA (guanine-N(7)-)-methyltransferase (219 aa).

Residues Glu46, Glu71, Asp100, and Asp122 each contribute to the S-adenosyl-L-methionine site. Asp122 is a catalytic residue. Residue Lys126 participates in substrate binding. Positions 128 to 133 are interaction with RNA; the sequence is KHEKRR. Substrate is bound by residues Asp158 and 199 to 202; that span reads TEYE.

Belongs to the class I-like SAM-binding methyltransferase superfamily. TrmB family.

The catalysed reaction is guanosine(46) in tRNA + S-adenosyl-L-methionine = N(7)-methylguanosine(46) in tRNA + S-adenosyl-L-homocysteine. Its pathway is tRNA modification; N(7)-methylguanine-tRNA biosynthesis. Its function is as follows. Catalyzes the formation of N(7)-methylguanine at position 46 (m7G46) in tRNA. This chain is tRNA (guanine-N(7)-)-methyltransferase, found in Oenococcus oeni (strain ATCC BAA-331 / PSU-1).